The primary structure comprises 572 residues: Flagellin A (572 aa).

Belongs to the bacterial flagellin family. As to quaternary structure, heteromer of FlaA and FlaB. Interacts with FliW.

The protein resides in the secreted. Its subcellular location is the bacterial flagellum. Flagellin is the subunit protein which polymerizes to form the filaments of bacterial flagella. FlaA binds to flagellar assembly factor FliW protein, preventing FliW from binding to CsrA, so that CsrA can then bind flaA mRNA and represses its translation. The chain is Flagellin A (flaA) from Campylobacter jejuni subsp. jejuni serotype O:2 (strain ATCC 700819 / NCTC 11168).